The primary structure comprises 346 residues: Dihydroorotate dehydrogenase (quinone) (346 aa).

Residues 61-65 and threonine 85 each bind FMN; that span reads AGLDK. Lysine 65 contacts substrate. A substrate-binding site is contributed by 110–114; sequence NRMGF. Residues asparagine 138 and asparagine 171 each contribute to the FMN site. Asparagine 171 serves as a coordination point for substrate. The active-site Nucleophile is serine 174. Asparagine 176 provides a ligand contact to substrate. Positions 216 and 244 each coordinate FMN. Residue 245 to 246 participates in substrate binding; that stretch reads NT. Residues glycine 267, glycine 296, and 317 to 318 each bind FMN; that span reads YS.

Belongs to the dihydroorotate dehydrogenase family. Type 2 subfamily. In terms of assembly, monomer. The cofactor is FMN.

The protein resides in the cell membrane. It catalyses the reaction (S)-dihydroorotate + a quinone = orotate + a quinol. The protein operates within pyrimidine metabolism; UMP biosynthesis via de novo pathway; orotate from (S)-dihydroorotate (quinone route): step 1/1. Functionally, catalyzes the conversion of dihydroorotate to orotate with quinone as electron acceptor. This is Dihydroorotate dehydrogenase (quinone) from Marinomonas sp. (strain MWYL1).